Reading from the N-terminus, the 216-residue chain is Large ribosomal subunit protein uL3 (216 aa).

Belongs to the universal ribosomal protein uL3 family. In terms of assembly, part of the 50S ribosomal subunit. Forms a cluster with proteins L14 and L19.

Its function is as follows. One of the primary rRNA binding proteins, it binds directly near the 3'-end of the 23S rRNA, where it nucleates assembly of the 50S subunit. This chain is Large ribosomal subunit protein uL3, found in Symbiobacterium thermophilum (strain DSM 24528 / JCM 14929 / IAM 14863 / T).